The primary structure comprises 712 residues: Phosphatase and actin regulator 4 (712 aa).

Disordered regions lie at residues 1-22 and 90-405; these read MGQADISRPVNPDGVEEIGQPT and RGLL…EVPK. An RPEL 1 repeat occupies 72–97; it reads EVLERKISMRKPREELVKRGLLLEDS. Positions 114–124 are enriched in polar residues; the sequence is NGHTTLIGSTR. Residues Ser125, Ser127, Ser140, and Ser156 each carry the phosphoserine modification. Residues 136 to 152 show a composition bias toward basic and acidic residues; the sequence is ERIASLRKPVPEEEPKK. Positions 198–230 are enriched in low complexity; that stretch reads ATSSGSLARPSSSASTTAITTAPAATMAATNPA. Over residues 233–243 the composition is skewed to polar residues; sequence VHSSGPPSQAP. Positions 245 to 267 are enriched in low complexity; the sequence is TLPAAPASTHTTATLSLTHTGPA. A phosphoserine mark is found at Ser282, Ser303, and Ser353. Residues 345 to 357 show a composition bias toward low complexity; it reads SEPLLTPSSSPLP. Positions 358–371 are enriched in pro residues; it reads AHIPPEPPQSPPFP. Ser436 is modified (phosphoserine). Phosphothreonine is present on Thr441. 7 positions are modified to phosphoserine: Ser452, Ser462, Ser473, Ser524, Ser526, Ser567, and Ser600. Residues 507 to 557 form a disordered region; that stretch reads VIPKLPQCLQEEEEGKESDSDSEGPIQYRDEEDEDESHHSALANKVKRKDT. Positions 516 to 528 are enriched in acidic residues; sequence QEEEEGKESDSDS. RPEL repeat units follow at residues 593–618 and 631–656; these read NTLIRRLSQRPTPEELEQRNILQPKN and RRLTRKLSQRPTVAELLARKILRFNE. The interval 602–626 is disordered; that stretch reads RPTPEELEQRNILQPKNEADRQAEK. Phosphoserine is present on Ser638.

It belongs to the phosphatase and actin regulator family. In terms of assembly, binds PPP1CA and actin.

Its subcellular location is the cytoplasm. The protein localises to the cell projection. It is found in the lamellipodium. In terms of biological role, regulator of protein phosphatase 1 (PP1) required for neural tube and optic fissure closure, and enteric neural crest cell (ENCCs) migration during development. Acts as an activator of PP1 by interacting with PPP1CA and preventing phosphorylation of PPP1CA at 'Thr-320'. During neural tube closure, localizes to the ventral neural tube and activates PP1, leading to down-regulate cell proliferation within cranial neural tissue and the neural retina. Also acts as a regulator of migration of enteric neural crest cells (ENCCs) by activating PP1, leading to dephosphorylation and subsequent activation of cofilin (COF1 or COF2) and repression of the integrin signaling through the RHO/ROCK pathway. The sequence is that of Phosphatase and actin regulator 4 (PHACTR4) from Bos taurus (Bovine).